A 122-amino-acid chain; its full sequence is Large ribosomal subunit protein uL29B (122 aa).

Positions 10–69 (QLGIKQIEERAAEIKAELAALRQKKNSGDVGANDIKTAKKNLARALTVRREKILEELVEA) form a coiled coil.

This sequence belongs to the universal ribosomal protein uL29 family. As to quaternary structure, component of the large ribosomal subunit.

It is found in the cytoplasm. This Encephalitozoon cuniculi (strain GB-M1) (Microsporidian parasite) protein is Large ribosomal subunit protein uL29B (RPL35C).